The following is a 130-amino-acid chain: Small ribosomal subunit protein uS9 (130 aa).

This sequence belongs to the universal ribosomal protein uS9 family.

This Buchnera aphidicola subsp. Acyrthosiphon pisum (strain 5A) protein is Small ribosomal subunit protein uS9.